Here is a 411-residue protein sequence, read N- to C-terminus: Cladofulvin cluster transcriptional coactivator claA (411 aa).

The span at 1–27 (MSDSLAGNGMRQNLNRSSTSSNHTGHA) shows a compositional bias: polar residues. Positions 1–32 (MSDSLAGNGMRQNLNRSSTSSNHTGHAQNGRA) are disordered. In terms of domain architecture, HTH iclR-type spans 47 to 117 (LACQVQSLAC…DPGHIAHTAL (71 aa)). Positions 77-96 (LHDVAELANVPASQLSRVVR) form a DNA-binding region, H-T-H motif.

It localises to the nucleus. Functionally, transcriptional coactivator; part of the gene cluster that mediates the biosynthesis of cladofulvin, a conidial pigment not required for virulence but that plays a role in fitness and resistance to environmental stresses including UV light and low-temperature stress. With claE, coregulates the production of cladofulvin. The sequence is that of Cladofulvin cluster transcriptional coactivator claA from Passalora fulva (Tomato leaf mold).